The chain runs to 640 residues: Biosynthetic arginine decarboxylase (640 aa).

Lysine 105 is subject to N6-(pyridoxal phosphate)lysine. Substrate is bound at residue 290-300; sequence FDVGGGLAIDY.

This sequence belongs to the Orn/Lys/Arg decarboxylase class-II family. SpeA subfamily. It depends on Mg(2+) as a cofactor. Pyridoxal 5'-phosphate serves as cofactor.

It carries out the reaction L-arginine + H(+) = agmatine + CO2. Catalyzes the biosynthesis of agmatine from arginine. This Vibrio vulnificus (strain CMCP6) protein is Biosynthetic arginine decarboxylase.